Consider the following 203-residue polypeptide: Synaptosomal-associated protein 25-B (203 aa).

The segment covering 1 to 11 (MADEADMRNEL) has biased composition (basic and acidic residues). The interval 1–25 (MADEADMRNELTDMQARADQLGDES) is disordered. T-SNARE coiled-coil homology domains follow at residues 19–81 (DQLG…LTDL) and 137–199 (DARE…ATKM).

Belongs to the SNAP-25 family.

The protein localises to the synapse. Its subcellular location is the synaptosome. It is found in the cell membrane. May play an important role in the synaptic function of specific neuronal systems. Associates with proteins involved in vesicle docking and membrane fusion. This is Synaptosomal-associated protein 25-B (snap25b) from Carassius auratus (Goldfish).